Here is a 270-residue protein sequence, read N- to C-terminus: Protein-ADP-ribose hydrolase (270 aa).

The 195-residue stretch at 73 to 267 (VSVKDCQKTN…LYDTYLQKEN (195 aa)) folds into the Macro domain. 3 residues coordinate ADP-D-ribose: Asp92, Ile93, and Asn106. Zn(2+) is bound by residues Cys112, His117, and Cys119. ADP-D-ribose is bound by residues Cys119, Ile120, Asp121, Ser212, Thr213, Gly214, Glu215, and Phe216.

Belongs to the MacroD-type family. Zn-Macro subfamily. The cofactor is Zn(2+).

The enzyme catalyses 4-O-(ADP-D-ribosyl)-L-aspartyl-[protein] + H2O = L-aspartyl-[protein] + ADP-D-ribose + H(+). Functionally, ADP-ribosylhydrolase that specifically reverses the SirTM-mediated mono-ADP-ribosylation at an asparatate residue of GcvH-L, by releasing ADP-ribose from the target protein. May play a role in the regulation of the response to host-induced oxidative stress. The chain is Protein-ADP-ribose hydrolase from Streptococcus pyogenes serotype M18 (strain MGAS8232).